Reading from the N-terminus, the 212-residue chain is Leucine efflux protein (212 aa).

The next 6 membrane-spanning stretches (helical) occupy residues 12 to 32, 49 to 69, 71 to 91, 122 to 142, 153 to 173, and 188 to 208; these read TYLVGAIFIVLVPGPNTLFVL, GVFIGDAVLMFLAWAGVATLI, TTPILFNIVRYLGAFYLLYLG, ILSLTNPKAILFYVSFFVQFI, FFILATTLELVSFCYLSFLII, and LAKVGNSLIGLMFVGFAARLA.

The protein belongs to the Rht family.

It is found in the cell inner membrane. It carries out the reaction L-leucine(in) + H(+)(out) = L-leucine(out) + H(+)(in). Functionally, exporter of leucine. The protein is Leucine efflux protein (leuE) of Escherichia coli O6:K15:H31 (strain 536 / UPEC).